The primary structure comprises 151 residues: UPF0178 protein Swoo_1444 (151 aa).

This sequence belongs to the UPF0178 family.

This is UPF0178 protein Swoo_1444 from Shewanella woodyi (strain ATCC 51908 / MS32).